Reading from the N-terminus, the 508-residue chain is MAEPVLTIHGVTKHFGAVKALRDVDFTLERGEVHALCGENGAGKSTLMNIIAGVLQPTEGEIRVDGKAVRISSPAAAQYLGIGLVHQEIALCPDATVAENMFMAATNRRRAPLMNYRRLERDAQAVMNRLAAIDVRRRVADLPISSQQLVEIAKALTLDCRVLILDEPTAALTETEAQQLFSIIRDLKANGISIIYISHRMAEIFSLCDRVTVFRDGRYVCTDRLADLTPDDVVRRMVGREITQLYPDKLGADERSGGIILEVDGISDGARFHDVTFGLRKGEILGIGGLIGSGRTEIAEGICGLRPRTAGTVRLHGAAQPIRAYSDAVKAGIVYLSEDRKGSGIFLEMSIAQNISVLDLKALTNAVGLLNGRAEAALADDFARRLAVRMSGIEAPVKSLSGGNQQKVAIAKQLAVKPKVILMDEPTRGIDVGAKAEIHRVLRELASAGIGIIVISSEMPELLGLSDRLLVVREGRIAGELSADEMSEEAVIRLASGMGSARAADHAA.

ABC transporter domains follow at residues 6-241 (LTIH…VGRE) and 254-499 (ERSG…SGMG). 38 to 45 (GENGAGKS) is an ATP binding site.

Belongs to the ABC transporter superfamily. Ribose importer (TC 3.A.1.2.1) family. In terms of assembly, the complex is composed of an ATP-binding protein (RbsA), two transmembrane proteins (RbsC) and a solute-binding protein (RbsB).

It localises to the cell inner membrane. The catalysed reaction is D-ribose(out) + ATP + H2O = D-ribose(in) + ADP + phosphate + H(+). In terms of biological role, part of the ABC transporter complex RbsABC involved in ribose import. Responsible for energy coupling to the transport system. In Rhizobium etli (strain ATCC 51251 / DSM 11541 / JCM 21823 / NBRC 15573 / CFN 42), this protein is Ribose import ATP-binding protein RbsA 2.